Here is a 356-residue protein sequence, read N- to C-terminus: Decorin (356 aa).

An N-terminal signal peptide occupies residues 1–15 (MRLVLFILLLPVCLA). A propeptide spanning residues 16 to 29 (TPFHQKGLFDFMLE) is cleaved from the precursor. O-linked (Xyl...) (glycosaminoglycan) serine glycosylation is present at Ser-45. 2 disulfide bridges follow: Cys-51-Cys-57 and Cys-55-Cys-64. LRR repeat units follow at residues 70-90 (ERVPKDLPPDTTLLDLQNNKI), 91-114 (TEIRDGDFKNLKNLHALILVNNKI), 115-138 (SKISPQAFAPLKKLERLYLSKNNL), 139-159 (KELPENMPKSLQEIRAHENEI), 160-183 (SKLRKAVFNGLNQVIVLELGTNPL), 184-209 (KSSGIENGAFQGMKRLSYIRIADTNI), 210-230 (TSIPKGLPPSLTELHLDGNKI), 231-254 (SKIDAEGLSGLTNLAKLGLSFNSI), 255-278 (SSVENGSLNNVPHLRELHLNNNEL), 279-301 (VRVPSGLGEHKYIQVVYLHNNKI), 302-331 (ASIGINDFCPLGYNTKKATYSGVSLFSNPV), and 332-356 (QYWEIQPSAFRCIHERSAVQIGNYK). N-linked (GlcNAc...) asparagine glycosylation occurs at Asn-208. N-linked (GlcNAc...) asparagine glycosylation occurs at Asn-259. Cys-310 and Cys-343 are disulfide-bonded.

This sequence belongs to the small leucine-rich proteoglycan (SLRP) family. SLRP class I subfamily. In terms of assembly, binds to type I and type II collagen, to fibronectin and TGF-beta. Forms a ternary complex with MFAP2 and ELN. In terms of processing, the attached glycosaminoglycan chain can be either chondroitin sulfate or dermatan sulfate depending upon the tissue of origin.

It localises to the secreted. It is found in the extracellular space. Its subcellular location is the extracellular matrix. Functionally, may affect the rate of fibrils formation. The protein is Decorin (DCN) of Coturnix japonica (Japanese quail).